Reading from the N-terminus, the 299-residue chain is Acetaldehyde dehydrogenase 1 (299 aa).

The active-site Acyl-thioester intermediate is the Cys130. Residues 161–169 (SVGPGTRKN) and Asn272 each bind NAD(+).

This sequence belongs to the acetaldehyde dehydrogenase family.

The catalysed reaction is acetaldehyde + NAD(+) + CoA = acetyl-CoA + NADH + H(+). This chain is Acetaldehyde dehydrogenase 1 (mhpF), found in Burkholderia cenocepacia (strain ATCC BAA-245 / DSM 16553 / LMG 16656 / NCTC 13227 / J2315 / CF5610) (Burkholderia cepacia (strain J2315)).